A 315-amino-acid chain; its full sequence is L-threo-3-deoxy-hexylosonate aldolase (315 aa).

S50–N51 is a binding site for substrate. K174 (schiff-base intermediate with substrate) is an active-site residue.

Belongs to the DapA family.

It carries out the reaction 2-dehydro-3-deoxy-L-galactonate = L-glyceraldehyde + pyruvate. The protein operates within carbohydrate acid metabolism. In terms of biological role, mediates the conversion of 2-dehydro-3-deoxy-L-galactonate to pyruvate and L-glyceraldehyde in D-galacturonate catabolic process. This is L-threo-3-deoxy-hexylosonate aldolase (lga1) from Hypocrea jecorina (Trichoderma reesei).